Consider the following 321-residue polypeptide: uncharacterized protein (321 aa).

The N-terminal stretch at 1–22 is a signal peptide; that stretch reads MKSIYKYTFMLFVFLFGTLMMA.

The protein belongs to the bacterial solute-binding protein 1 family. WtpA subfamily.

This is an uncharacterized protein from Petrotoga mobilis (strain DSM 10674 / SJ95).